We begin with the raw amino-acid sequence, 227 residues long: UPF0758 protein Dhaf_4352 (227 aa).

The region spanning V105–L227 is the MPN domain. Zn(2+) is bound by residues H176, H178, and D189. The JAMM motif signature appears at H176–D189.

The protein belongs to the UPF0758 family.

The polypeptide is UPF0758 protein Dhaf_4352 (Desulfitobacterium hafniense (strain DSM 10664 / DCB-2)).